Reading from the N-terminus, the 137-residue chain is Glutamate mutase sigma subunit (137 aa).

The 135-residue stretch at 3 to 137 (KKTIVLGVIG…ADLKKDLNIE (135 aa)) folds into the B12-binding domain. Adenosylcob(III)alamin contacts are provided by residues 13-17 (SDCHA), His16, 61-63 (SSL), and 93-97 (NIVVG).

It belongs to the methylaspartate mutase GlmS subunit family. In terms of assembly, heterotetramer composed of 2 epsilon subunits (GlmE) and 2 sigma subunits (GlmS). GlmE exists as a homodimer and GlmS as a monomer. Adenosylcob(III)alamin serves as cofactor.

The enzyme catalyses (2S,3S)-3-methyl-L-aspartate = L-glutamate. Its pathway is amino-acid degradation; L-glutamate degradation via mesaconate pathway; acetate and pyruvate from L-glutamate: step 1/4. Competitively inhibited by (2S,4S)-4-fluoroglutamate, 2-methyleneglutarate, (2R,3RS)-3-fluoroglutamate and (S)-3-methylitaconate. Functionally, catalyzes the carbon skeleton rearrangement of L-glutamate to L-threo-3-methylaspartate ((2S,3S)-3-methylaspartate). This is Glutamate mutase sigma subunit from Clostridium cochlearium.